A 181-amino-acid chain; its full sequence is Large ribosomal subunit protein uL5 (181 aa).

Belongs to the universal ribosomal protein uL5 family. As to quaternary structure, part of the 50S ribosomal subunit; part of the 5S rRNA/L5/L18/L25 subcomplex. Contacts the 5S rRNA and the P site tRNA. Forms a bridge to the 30S subunit in the 70S ribosome.

In terms of biological role, this is one of the proteins that bind and probably mediate the attachment of the 5S RNA into the large ribosomal subunit, where it forms part of the central protuberance. In the 70S ribosome it contacts protein S13 of the 30S subunit (bridge B1b), connecting the 2 subunits; this bridge is implicated in subunit movement. Contacts the P site tRNA; the 5S rRNA and some of its associated proteins might help stabilize positioning of ribosome-bound tRNAs. The sequence is that of Large ribosomal subunit protein uL5 from Trichodesmium erythraeum (strain IMS101).